Here is a 199-residue protein sequence, read N- to C-terminus: Holliday junction branch migration complex subunit RuvA (199 aa).

Residues methionine 1–arginine 64 form a domain I region. Residues threonine 65–glycine 143 form a domain II region. The tract at residues glycine 144 to proline 148 is flexible linker. The interval alanine 149–lysine 199 is domain III.

It belongs to the RuvA family. As to quaternary structure, homotetramer. Forms an RuvA(8)-RuvB(12)-Holliday junction (HJ) complex. HJ DNA is sandwiched between 2 RuvA tetramers; dsDNA enters through RuvA and exits via RuvB. An RuvB hexamer assembles on each DNA strand where it exits the tetramer. Each RuvB hexamer is contacted by two RuvA subunits (via domain III) on 2 adjacent RuvB subunits; this complex drives branch migration. In the full resolvosome a probable DNA-RuvA(4)-RuvB(12)-RuvC(2) complex forms which resolves the HJ.

It localises to the cytoplasm. In terms of biological role, the RuvA-RuvB-RuvC complex processes Holliday junction (HJ) DNA during genetic recombination and DNA repair, while the RuvA-RuvB complex plays an important role in the rescue of blocked DNA replication forks via replication fork reversal (RFR). RuvA specifically binds to HJ cruciform DNA, conferring on it an open structure. The RuvB hexamer acts as an ATP-dependent pump, pulling dsDNA into and through the RuvAB complex. HJ branch migration allows RuvC to scan DNA until it finds its consensus sequence, where it cleaves and resolves the cruciform DNA. In Citrifermentans bemidjiense (strain ATCC BAA-1014 / DSM 16622 / JCM 12645 / Bem) (Geobacter bemidjiensis), this protein is Holliday junction branch migration complex subunit RuvA.